The chain runs to 493 residues: MSKVDLWQDATAQAELVRSGEISRTELLEATIAHVQAVNPEINAVIIPLFEKARRESELASGPFAGVPYLLKDLTVVSQGDINTSSIKGMKESGYRADHDAYFVQRMRAAGFVLLGKTNTPEMGNQVTTEPEAWGATRNPWNLGRSVGGSSGGSGAAVAAALSPVAHGNDAAGSVRIPASVCGVVGLKPTRGRISPGPLVTDSDNVAGAAHEGLFARSVRDIAALLDVVSGHRPGDTFCAPTASRPYAQGISENPGSLRVGVLTHNPVGDFALDPECAAAARGAAAALAALGHDVNDAYPEALGDRSFLKDYSTICDVAIAREIERNGELIGRPLTEDDVEWTSWEMVKRADQVTGRAFAACVDELRYYAGKVERWWEAGWDLLILPTVTRQTPEIGELMLAKGTDLEGRQSAFISGSLQMLAFTVPFNVSGQPAISLPIGMSSDGMPIGVQIVAAYGREDLLLQVAAQLEGALPWVARRPQLLNPSRKIPAA.

Catalysis depends on charge relay system residues lysine 72 and serine 150. Serine 174 functions as the Acyl-ester intermediate in the catalytic mechanism.

It belongs to the amidase family. In terms of assembly, homodimer.

It carries out the reaction 1,8-diazacyclotetradecane-2,9-dione + H2O = N-(6-aminohexanoyl)-6-aminohexanoate. It participates in xenobiotic degradation; nylon-6 oligomer degradation. Its activity is regulated as follows. Strongly inhibited by 1 uM diisopropylphosphofluoridate and 10 uM p-chloromercuribenzoate but scarcely inhibited by 100 mM EDTA in vitro. Specifically catalyzes the hydrolysis of 6-aminohexanoic acid cyclic dimer (1,8-diazacyclotetradecane-2,9-dione) to form the linear dimer 6-aminohexanoyl-6-aminohexanoic acid. Is inactive on 6-aminohexanoic acid oligomers (degree of polymerization 2 to 6), various other cyclic amides, cyclic diamides, linear amides, oligopeptides, and casein. Allows the bacterium to grow on a medium containing 6-aminohexanoic acid cyclic dimer as the sole carbon and nitrogen sources. In Paenarthrobacter ureafaciens, this protein is 6-aminohexanoate-cyclic-dimer hydrolase (nylA).